We begin with the raw amino-acid sequence, 685 residues long: Frizzled-8 (685 aa).

The N-terminal stretch at 1 to 27 is a signal peptide; it reads MEWGYLLEVTSLLAALAVLQRSSGAAA. Residues 28-272 are Extracellular-facing; it reads ASAKELACQE…NPFFSQDERA (245 aa). In terms of domain architecture, FZ spans 30–151; it reads AKELACQEIT…GNPDTLCMDY (122 aa). 5 disulfides stabilise this stretch: cysteine 35/cysteine 96, cysteine 43/cysteine 89, cysteine 80/cysteine 118, cysteine 107/cysteine 148, and cysteine 111/cysteine 135. An N-linked (GlcNAc...) asparagine glycan is attached at asparagine 49. 71-78 contributes to the hexadecanoate binding site; sequence QFWPLVEI. A wnt-binding region spans residues 95–100; that stretch reads ICLEDY. The wnt-binding stretch occupies residues 147–152; that stretch reads LCMDYN. The N-linked (GlcNAc...) asparagine glycan is linked to asparagine 152. The interval 155–223 is disordered; it reads DLTTAAPSPP…KARPPGGGAA (69 aa). The segment covering 161–176 has biased composition (pro residues); that stretch reads PSPPRRLPPPPPPGEQ. 2 stretches are compositionally biased toward low complexity: residues 177–187 and 200–223; these read PPSGSGHSRPP and GSGDAAAAPPSRGGKARPPGGGAA. The chain crosses the membrane as a helical span at residues 273–293; that stretch reads FTVFWIGLWSVLCFVSTFATV. Topologically, residues 294 to 309 are cytoplasmic; sequence STFLIDMERFKYPERP. A helical transmembrane segment spans residues 310 to 330; sequence IIFLSACYLFVSVGYLVRLVA. Over 331 to 394 the chain is Extracellular; the sequence is GHEKVACSGG…RYETTGPALC (64 aa). The chain crosses the membrane as a helical span at residues 395–415; it reads TVVFLLVYFFGMASSIWWVIL. The Cytoplasmic portion of the chain corresponds to 416-437; the sequence is SLTWFLAAGMKWGNEAIAGYSQ. Residues 438–458 form a helical membrane-spanning segment; the sequence is YFHLAAWLVPSVKSIAVLALS. Residues 459 to 481 are Extracellular-facing; sequence SVDGDPVAGICYVGNQSLDNLRG. Asparagine 473 is a glycosylation site (N-linked (GlcNAc...) asparagine). The helical transmembrane segment at 482 to 502 threads the bilayer; that stretch reads FVLAPLVIYLFIGTMFLLAGF. The Cytoplasmic segment spans residues 503-530; the sequence is VSLFRIRSVIKQQGGPTKTHKLEKLMIR. A helical membrane pass occupies residues 531 to 551; it reads LGLFTVLYTVPAAVVVACLFY. At 552–582 the chain is on the extracellular side; that stretch reads EQHNRPRWEATHNCPCLRDLQPDQARRPDYA. A helical membrane pass occupies residues 583-603; sequence VFMLKYFMCLVVGITSGVWVW. Over 604–685 the chain is Cytoplasmic; sequence SGKTLESWRA…YPKQMPLSQV (82 aa). The Lys-Thr-X-X-X-Trp motif, mediates interaction with the PDZ domain of Dvl family members motif lies at 606–611; that stretch reads KTLESW. The span at 631-655 shows a compositional bias: gly residues; that stretch reads AGGSGPGGSGPGPGGGGGHGGGGGS. A disordered region spans residues 631 to 656; that stretch reads AGGSGPGGSGPGPGGGGGHGGGGGSL. Residues 683–685 carry the PDZ-binding motif; that stretch reads SQV.

It belongs to the G-protein coupled receptor Fz/Smo family. In terms of assembly, component of a Wnt-signaling complex that contains a WNT protein, a FZD protein and LRP5 or LRP6. Interacts directly with LRP5 or LRP6; the interaction is promoted by Wnt-binding and signaling and inhibited by DKK1. Interacts (via the PDZ-binding motif) with GPOC (via its PDZ domain). Interacts with RSPO1 and RSPO3. Interacts with glypican GPC3. Ubiquitinated by ZNRF3, leading to its degradation by the proteasome. In terms of tissue distribution, expressed in chondrocytes.

The protein resides in the membrane. Its subcellular location is the golgi apparatus. It localises to the cell membrane. Functionally, receptor for Wnt proteins. Component of the Wnt-Fzd-LRP5-LRP6 complex that triggers beta-catenin signaling through inducing aggregation of receptor-ligand complexes into ribosome-sized signalosomes. The beta-catenin canonical signaling pathway leads to the activation of disheveled proteins, inhibition of GSK-3 kinase, nuclear accumulation of beta-catenin and activation of Wnt target genes. A second signaling pathway involving PKC and calcium fluxes has been seen for some family members, but it is not yet clear if it represents a distinct pathway or if it can be integrated in the canonical pathway, as PKC seems to be required for Wnt-mediated inactivation of GSK-3 kinase. Both pathways seem to involve interactions with G-proteins. May be involved in transduction and intercellular transmission of polarity information during tissue morphogenesis and/or in differentiated tissues. Coreceptor along with RYK of Wnt proteins, such as WNT1. The protein is Frizzled-8 (Fzd8) of Mus musculus (Mouse).